A 235-amino-acid chain; its full sequence is Glucosamine-6-phosphate deaminase (235 aa).

The active-site Proton acceptor; for enolization step is the Asp-62. The active-site For ring-opening step is Asn-128. His-130 acts as the Proton acceptor; for ring-opening step in catalysis. The For ring-opening step role is filled by Glu-135.

This sequence belongs to the glucosamine/galactosamine-6-phosphate isomerase family. NagB subfamily.

The enzyme catalyses alpha-D-glucosamine 6-phosphate + H2O = beta-D-fructose 6-phosphate + NH4(+). It functions in the pathway amino-sugar metabolism; N-acetylneuraminate degradation; D-fructose 6-phosphate from N-acetylneuraminate: step 5/5. In terms of biological role, catalyzes the reversible isomerization-deamination of glucosamine 6-phosphate (GlcN6P) to form fructose 6-phosphate (Fru6P) and ammonium ion. This chain is Glucosamine-6-phosphate deaminase, found in Latilactobacillus sakei subsp. sakei (strain 23K) (Lactobacillus sakei subsp. sakei).